Consider the following 173-residue polypeptide: Mediator of RNA polymerase II transcription subunit 10 (173 aa).

Polar residues predominate over residues 1-20; that stretch reads MDPNSPMFQNTPQQPMSLQR. A disordered region spans residues 1-45; that stretch reads MDPNSPMFQNTPQQPMSLQRSVDDRIDRERTAKKEKDDEKKKQED. Positions 21–45 are enriched in basic and acidic residues; the sequence is SVDDRIDRERTAKKEKDDEKKKQED.

The protein belongs to the Mediator complex subunit 10 family. Component of the Mediator complex.

The protein resides in the nucleus. Component of the Mediator complex, a coactivator involved in the regulated transcription of nearly all RNA polymerase II-dependent genes. Mediator functions as a bridge to convey information from gene-specific regulatory proteins to the basal RNA polymerase II transcription machinery. Mediator is recruited to promoters by direct interactions with regulatory proteins and serves as a scaffold for the assembly of a functional preinitiation complex with RNA polymerase II and the general transcription factors. In Caenorhabditis briggsae, this protein is Mediator of RNA polymerase II transcription subunit 10 (mdt-10).